The sequence spans 871 residues: Valine--tRNA ligase (871 aa).

Residues 47–57 (PNVTGRLHIGH) carry the 'HIGH' region motif. The short motif at 534–538 (KMSKS) is the 'KMSKS' region element. ATP is bound at residue Lys537. Residues 805–871 (DLTPILNRLN…IEEELARLTR (67 aa)) adopt a coiled-coil conformation.

This sequence belongs to the class-I aminoacyl-tRNA synthetase family. ValS type 1 subfamily. Monomer.

Its subcellular location is the cytoplasm. It catalyses the reaction tRNA(Val) + L-valine + ATP = L-valyl-tRNA(Val) + AMP + diphosphate. Functionally, catalyzes the attachment of valine to tRNA(Val). As ValRS can inadvertently accommodate and process structurally similar amino acids such as threonine, to avoid such errors, it has a 'posttransfer' editing activity that hydrolyzes mischarged Thr-tRNA(Val) in a tRNA-dependent manner. The sequence is that of Valine--tRNA ligase from Nitratiruptor sp. (strain SB155-2).